A 694-amino-acid polypeptide reads, in one-letter code: uncharacterized protein (694 aa).

The stretch at 15-51 forms a coiled coil; sequence HKEKMELLDQFDNERKEWESQWKIMQKKIEELCREVK. 3 disordered regions span residues 259–286, 461–490, and 643–680; these read LKRN…EQAY, QNHS…QSND, and NASH…RRTT. Polar residues-rich tracts occupy residues 272 to 283 and 476 to 490; these read STSRNFPSSDSE and DTSS…QSND. The segment covering 663 to 677 has biased composition (low complexity); sequence SRWASRSPSAPPALR.

This is an uncharacterized protein from Homo sapiens (Human).